A 264-amino-acid chain; its full sequence is Small ribosomal subunit protein eS1B (264 aa).

The segment covering 1–19 has biased composition (basic residues); sequence MALGKNKRISKGGKRGKRG. The segment at 1 to 23 is disordered; the sequence is MALGKNKRISKGGKRGKRGKAQE.

This sequence belongs to the eukaryotic ribosomal protein eS1 family. In terms of assembly, component of the small ribosomal subunit. Mature ribosomes consist of a small (40S) and a large (60S) subunit. The 40S subunit contains about 33 different proteins and 1 molecule of RNA (18S). The 60S subunit contains about 49 different proteins and 3 molecules of RNA (25S, 5.8S and 5S).

It localises to the cytoplasm. The sequence is that of Small ribosomal subunit protein eS1B from Leishmania infantum.